Reading from the N-terminus, the 149-residue chain is Large ribosomal subunit protein uL11 (149 aa).

Belongs to the universal ribosomal protein uL11 family. As to quaternary structure, part of the ribosomal stalk of the 50S ribosomal subunit. Interacts with L10 and the large rRNA to form the base of the stalk. L10 forms an elongated spine to which L12 dimers bind in a sequential fashion forming a multimeric L10(L12)X complex. Post-translationally, one or more lysine residues are methylated.

Functionally, forms part of the ribosomal stalk which helps the ribosome interact with GTP-bound translation factors. This is Large ribosomal subunit protein uL11 from Methylobacterium radiotolerans (strain ATCC 27329 / DSM 1819 / JCM 2831 / NBRC 15690 / NCIMB 10815 / 0-1).